We begin with the raw amino-acid sequence, 691 residues long: DNA ligase (691 aa).

NAD(+) is bound by residues 53-57 (DSEYD), 102-103 (SL), and E135. The active-site N6-AMP-lysine intermediate is K137. Positions 158, 195, 310, and 334 each coordinate NAD(+). Zn(2+)-binding residues include C428, C431, C446, and C452. The region spanning 613-691 (SEGLPLDGQT…EEEFLVLVGE (79 aa)) is the BRCT domain.

This sequence belongs to the NAD-dependent DNA ligase family. LigA subfamily. Requires Mg(2+) as cofactor. Mn(2+) serves as cofactor.

It catalyses the reaction NAD(+) + (deoxyribonucleotide)n-3'-hydroxyl + 5'-phospho-(deoxyribonucleotide)m = (deoxyribonucleotide)n+m + AMP + beta-nicotinamide D-nucleotide.. Its function is as follows. DNA ligase that catalyzes the formation of phosphodiester linkages between 5'-phosphoryl and 3'-hydroxyl groups in double-stranded DNA using NAD as a coenzyme and as the energy source for the reaction. It is essential for DNA replication and repair of damaged DNA. The protein is DNA ligase of Psychrobacter cryohalolentis (strain ATCC BAA-1226 / DSM 17306 / VKM B-2378 / K5).